The following is a 434-amino-acid chain: Glucose-1-phosphate adenylyltransferase (434 aa).

Alpha-D-glucose 1-phosphate is bound by residues Tyr-112, Gly-178, 193-194, and Ser-211; that span reads EK.

Belongs to the bacterial/plant glucose-1-phosphate adenylyltransferase family. Homotetramer.

The enzyme catalyses alpha-D-glucose 1-phosphate + ATP + H(+) = ADP-alpha-D-glucose + diphosphate. It participates in glycan biosynthesis; glycogen biosynthesis. Functionally, involved in the biosynthesis of ADP-glucose, a building block required for the elongation reactions to produce glycogen. Catalyzes the reaction between ATP and alpha-D-glucose 1-phosphate (G1P) to produce pyrophosphate and ADP-Glc. This Mannheimia succiniciproducens (strain KCTC 0769BP / MBEL55E) protein is Glucose-1-phosphate adenylyltransferase.